The following is a 273-amino-acid chain: Hydroxyethylthiazole kinase (273 aa).

Methionine 49 provides a ligand contact to substrate. ATP-binding residues include lysine 125 and threonine 171. Glycine 198 lines the substrate pocket.

This sequence belongs to the Thz kinase family. It depends on Mg(2+) as a cofactor.

The enzyme catalyses 5-(2-hydroxyethyl)-4-methylthiazole + ATP = 4-methyl-5-(2-phosphooxyethyl)-thiazole + ADP + H(+). Its pathway is cofactor biosynthesis; thiamine diphosphate biosynthesis; 4-methyl-5-(2-phosphoethyl)-thiazole from 5-(2-hydroxyethyl)-4-methylthiazole: step 1/1. Functionally, catalyzes the phosphorylation of the hydroxyl group of 4-methyl-5-beta-hydroxyethylthiazole (THZ). The polypeptide is Hydroxyethylthiazole kinase (Natranaerobius thermophilus (strain ATCC BAA-1301 / DSM 18059 / JW/NM-WN-LF)).